The sequence spans 464 residues: Probable pectin lyase F (464 aa).

The signal sequence occupies residues 1–20; the sequence is MAIIRSVIAATALLGAAVNA. A disulfide bridge links C80 with C103. N-linked (GlcNAc...) asparagine glycosylation occurs at N126. R252 is a catalytic residue. An intrachain disulfide couples C319 to C327. The interval 424–464 is disordered; it reads EHEVSTPAVPTPTPVPSSVGSHGSTAGSSHPPAFSRTSFES. Residues 439 to 448 show a composition bias toward low complexity; sequence PSSVGSHGST.

Belongs to the polysaccharide lyase 1 family.

The protein localises to the secreted. It carries out the reaction Eliminative cleavage of (1-&gt;4)-alpha-D-galacturonan methyl ester to give oligosaccharides with 4-deoxy-6-O-methyl-alpha-D-galact-4-enuronosyl groups at their non-reducing ends.. In terms of biological role, pectinolytic enzymes consist of four classes of enzymes: pectin lyase, polygalacturonase, pectin methylesterase and rhamnogalacturonase. Among pectinolytic enzymes, pectin lyase is the most important in depolymerization of pectin, since it cleaves internal glycosidic bonds of highly methylated pectins. The chain is Probable pectin lyase F (pelF) from Emericella nidulans (strain FGSC A4 / ATCC 38163 / CBS 112.46 / NRRL 194 / M139) (Aspergillus nidulans).